A 269-amino-acid polypeptide reads, in one-letter code: MNQMNPAFVMPDVQSTVDTRQIPIQRVGVKAVRHPLTVRTESGDVQPTVGVWNLDVHLPADQKGTHMSRFVALLEDSREPLTVERFRAMLASMLVRLEAEAGRIEVTFPYFVNKTAPVSGVQSLLDYEVTLAGESRNGETRLFLKVLVPVTSLCPCSKKISQYGAHNQRSHVTIDAELAADLPVEALIRIAEEEASCELWGLLKRPDEKFVTERAYENPKFVEDLVRDVAQRLDADERVVAYVLEAENFESIHNHSAYALIERDKRHAA.

Belongs to the GTP cyclohydrolase IV family.

It carries out the reaction GTP + H2O = 7,8-dihydroneopterin 3'-triphosphate + formate + H(+). It functions in the pathway cofactor biosynthesis; 7,8-dihydroneopterin triphosphate biosynthesis; 7,8-dihydroneopterin triphosphate from GTP: step 1/1. In terms of biological role, converts GTP to 7,8-dihydroneopterin triphosphate. In Burkholderia ambifaria (strain ATCC BAA-244 / DSM 16087 / CCUG 44356 / LMG 19182 / AMMD) (Burkholderia cepacia (strain AMMD)), this protein is GTP cyclohydrolase FolE2.